The chain runs to 79 residues: MDISKMNRYTAPVNFASLPLLTTFLCGVGLLLLATFTMIQVTSTKYNRNLLKELFIAATSSVFLGFGSVFLLLWVGIYV.

2 helical membrane passes run 19-39 (PLLT…FTMI) and 55-75 (FIAA…LLWV).

It belongs to the OST5 family. As to quaternary structure, component of the oligosaccharyltransferase (OST) complex.

The protein resides in the membrane. It participates in protein modification; protein glycosylation. Functionally, subunit of the oligosaccharyl transferase (OST) complex that catalyzes the initial transfer of a defined glycan (Glc(3)Man(9)GlcNAc(2) in eukaryotes) from the lipid carrier dolichol-pyrophosphate to an asparagine residue within an Asn-X-Ser/Thr consensus motif in nascent polypeptide chains, the first step in protein N-glycosylation. N-glycosylation occurs cotranslationally and the complex associates with the Sec61 complex at the channel-forming translocon complex that mediates protein translocation across the endoplasmic reticulum (ER). All subunits are required for a maximal enzyme activity. The protein is Dolichyl-diphosphooligosaccharide--protein glycosyltransferase subunit TMEM258 of Caenorhabditis elegans.